We begin with the raw amino-acid sequence, 100 residues long: MTISSNENSASLRAQIQQCLVESGNYEAISNELTERLLKDGWLDEVKKLAREEISQEDSPNFSKALSQIEPQALDLVQQSTKDAIMRKITAFLEEIVETE.

It belongs to the ENY2 family. Component of the nuclear pore complex (NPC)-associated TREX-2 complex (transcription and export complex 2), composed of at least SUS1, SAC3, THP1, SEM1, and CDC31. TREX-2 contains 2 SUS1 chains. The TREX-2 complex interacts with the nucleoporin NUP1. Component of the 1.8 MDa SAGA transcription coactivator-HAT complex. SAGA is built of 5 distinct domains with specialized functions. Within the SAGA complex, SUS1, SGF11, SGF73 and UBP8 form an additional subcomplex of SAGA called the DUB module (deubiquitination module). Interacts directly with THP1, SAC3, SGF11, and with the RNA polymerase II.

The protein localises to the nucleus. It is found in the nucleoplasm. The protein resides in the cytoplasm. It localises to the P-body. Involved in mRNA export coupled transcription activation by association with both the TREX-2 and the SAGA complexes. At the promoters, SAGA is required for recruitment of the basal transcription machinery. It influences RNA polymerase II transcriptional activity through different activities such as TBP interaction and promoter selectivity, interaction with transcription activators, and chromatin modification through histone acetylation and deubiquitination. Within the SAGA complex, participates in a subcomplex required for deubiquitination of H2B and for the maintenance of steady-state H3 methylation levels. The TREX-2 complex functions in docking export-competent ribonucleoprotein particles (mRNPs) to the nuclear entrance of the nuclear pore complex (nuclear basket). TREX-2 participates in mRNA export and accurate chromatin positioning in the nucleus by tethering genes to the nuclear periphery. May also be involved in cytoplasmic mRNA decay by interaction with components of P-bodies. This chain is Transcription and mRNA export factor SUS1, found in Candida glabrata (strain ATCC 2001 / BCRC 20586 / JCM 3761 / NBRC 0622 / NRRL Y-65 / CBS 138) (Yeast).